A 4349-amino-acid polypeptide reads, in one-letter code: Dynein heavy chain, cytoplasmic (4349 aa).

Residues Met-1 to Asn-1907 form a stem region. Coiled coils occupy residues Trp-459–Lys-480, Leu-1178–Gln-1215, Ser-1266–Ile-1293, Glu-1334–Leu-1354, Tyr-1560–Val-1577, and Asn-1640–Arg-1670. 4 AAA regions span residues Tyr-1908 to Ser-2133, Asn-2201 to Ala-2459, Glu-2565 to Gly-2814, and Thr-2908 to Val-3177. Gly-1946–Thr-1953 serves as a coordination point for ATP. Residues Ala-2194 to Leu-2217 are a coiled coil. Residues Gly-2239–Ser-2246, Gly-2604–Thr-2611, and Gly-2946–Thr-2953 contribute to the ATP site. Coiled-coil stretches lie at residues Leu-3186 to Ala-3294, Gly-3420 to Arg-3477, and Asp-3774 to Ile-3807. Residues Leu-3186–Arg-3477 are stalk. 2 AAA regions span residues Leu-3563 to Ala-3792 and Ala-4001 to Thr-4213.

Belongs to the dynein heavy chain family. As to quaternary structure, consists of at least two heavy chains and a number of intermediate and light chains.

It is found in the cytoplasm. Its subcellular location is the cytoskeleton. Cytoplasmic dynein acts as a motor for the intracellular retrograde motility of vesicles and organelles along microtubules. Dynein has ATPase activity; the force-producing power stroke is thought to occur on release of ADP. This chain is Dynein heavy chain, cytoplasmic (DHC1), found in Fusarium vanettenii (Neocosmospora pisi).